The sequence spans 558 residues: Kelch-like protein 23 (558 aa).

In terms of domain architecture, BTB spans 36-104 (TDITLQCPSG…AYTSQIEITK (69 aa)). A BACK domain is found at 139–240 (CIGMHSFAEF…DPVYLKTALG (102 aa)). Kelch repeat units follow at residues 274-320 (TMYI…CLGP), 321-369 (NIYV…TLGG), 370-416 (CVYA…VLHD), 418-466 (IYVI…PFEN), 467-508 (KLYL…IMNG), and 510-557 (IYVT…CVYN).

This chain is Kelch-like protein 23 (KLHL23), found in Homo sapiens (Human).